The primary structure comprises 425 residues: Serine--tRNA ligase (425 aa).

Disordered regions lie at residues 43-69 (QRSS…SDPK) and 108-134 (LPNL…WGKP). The segment covering 117 to 134 (PEGRDENDNQERHRWGKP) has biased composition (basic and acidic residues). Residue 233–235 (TAE) participates in L-serine binding. 264–266 (RRE) serves as a coordination point for ATP. Glutamate 287 contacts L-serine. 351–354 (EISS) serves as a coordination point for ATP. Residue serine 385 coordinates L-serine.

It belongs to the class-II aminoacyl-tRNA synthetase family. Type-1 seryl-tRNA synthetase subfamily. As to quaternary structure, homodimer. The tRNA molecule binds across the dimer.

The protein resides in the cytoplasm. The catalysed reaction is tRNA(Ser) + L-serine + ATP = L-seryl-tRNA(Ser) + AMP + diphosphate + H(+). The enzyme catalyses tRNA(Sec) + L-serine + ATP = L-seryl-tRNA(Sec) + AMP + diphosphate + H(+). It functions in the pathway aminoacyl-tRNA biosynthesis; selenocysteinyl-tRNA(Sec) biosynthesis; L-seryl-tRNA(Sec) from L-serine and tRNA(Sec): step 1/1. Catalyzes the attachment of serine to tRNA(Ser). Is also able to aminoacylate tRNA(Sec) with serine, to form the misacylated tRNA L-seryl-tRNA(Sec), which will be further converted into selenocysteinyl-tRNA(Sec). The protein is Serine--tRNA ligase of Prochlorococcus marinus (strain MIT 9313).